The primary structure comprises 438 residues: 23S rRNA (uracil(1939)-C(5))-methyltransferase RlmD (438 aa).

The TRAM domain occupies 11–69; it reads LQPESKHQQVLVEKLDHQGAGIAYLNKKPLFIDGTLPGEEVVTQLTESKSKFARGKLIK. C82, C88, C91, and C169 together coordinate [4Fe-4S] cluster. S-adenosyl-L-methionine contacts are provided by Q272, F301, N306, E322, N349, and D370. C396 functions as the Nucleophile in the catalytic mechanism.

This sequence belongs to the class I-like SAM-binding methyltransferase superfamily. RNA M5U methyltransferase family. RlmD subfamily.

It catalyses the reaction uridine(1939) in 23S rRNA + S-adenosyl-L-methionine = 5-methyluridine(1939) in 23S rRNA + S-adenosyl-L-homocysteine + H(+). Catalyzes the formation of 5-methyl-uridine at position 1939 (m5U1939) in 23S rRNA. The chain is 23S rRNA (uracil(1939)-C(5))-methyltransferase RlmD from Vibrio vulnificus (strain YJ016).